The chain runs to 517 residues: Variant surface glycoprotein MVAT5 (517 aa).

The first 21 residues, 1–21 (MIGKAFIILSLLNELPTPTAA), serve as a signal peptide directing secretion. 2 disulfide bridges follow: cysteine 417–cysteine 430 and cysteine 426–cysteine 443. Asparagine 435 carries an N-linked (GlcNAc...) asparagine glycan. The span at 454–470 (QAAQTAGAGEGAAGTTT) shows a compositional bias: low complexity. A disordered region spans residues 454-487 (QAAQTAGAGEGAAGTTTDKCKDKKKDDCKSPDCK). Residues 471–487 (DKCKDKKKDDCKSPDCK) show a composition bias toward basic and acidic residues. Aspartate 495 carries GPI-anchor amidated aspartate lipidation. Residues 496–517 (SSILLNKQFALMVSAAFVALLF) constitute a propeptide, removed in mature form.

It localises to the cell membrane. In terms of biological role, VSG forms a coat on the surface of the parasite. The trypanosome evades the immune response of the host by expressing a series of antigenically distinct VSGs from an estimated 1000 VSG genes. In Trypanosoma brucei rhodesiense, this protein is Variant surface glycoprotein MVAT5.